We begin with the raw amino-acid sequence, 100 residues long: Urease subunit gamma (100 aa).

It belongs to the urease gamma subunit family. As to quaternary structure, heterotrimer of UreA (gamma), UreB (beta) and UreC (alpha) subunits. Three heterotrimers associate to form the active enzyme.

It localises to the cytoplasm. The catalysed reaction is urea + 2 H2O + H(+) = hydrogencarbonate + 2 NH4(+). Its pathway is nitrogen metabolism; urea degradation; CO(2) and NH(3) from urea (urease route): step 1/1. The chain is Urease subunit gamma from Mycobacterium bovis (strain ATCC BAA-935 / AF2122/97).